The chain runs to 65 residues: Large ribosomal subunit protein bL35 (65 aa).

This sequence belongs to the bacterial ribosomal protein bL35 family.

In Paraburkholderia phytofirmans (strain DSM 17436 / LMG 22146 / PsJN) (Burkholderia phytofirmans), this protein is Large ribosomal subunit protein bL35.